The following is a 396-amino-acid chain: ATP phosphoribosyltransferase regulatory subunit (396 aa).

The protein belongs to the class-II aminoacyl-tRNA synthetase family. HisZ subfamily. In terms of assembly, heteromultimer composed of HisG and HisZ subunits.

The protein resides in the cytoplasm. It functions in the pathway amino-acid biosynthesis; L-histidine biosynthesis; L-histidine from 5-phospho-alpha-D-ribose 1-diphosphate: step 1/9. Required for the first step of histidine biosynthesis. May allow the feedback regulation of ATP phosphoribosyltransferase activity by histidine. The protein is ATP phosphoribosyltransferase regulatory subunit of Alkaliphilus metalliredigens (strain QYMF).